The chain runs to 153 residues: SsrA-binding protein (153 aa).

The interval 129–153 is disordered; that stretch reads KREDMKKKDQSREMAQALREKSKSH.

Belongs to the SmpB family.

The protein resides in the cytoplasm. Its function is as follows. Required for rescue of stalled ribosomes mediated by trans-translation. Binds to transfer-messenger RNA (tmRNA), required for stable association of tmRNA with ribosomes. tmRNA and SmpB together mimic tRNA shape, replacing the anticodon stem-loop with SmpB. tmRNA is encoded by the ssrA gene; the 2 termini fold to resemble tRNA(Ala) and it encodes a 'tag peptide', a short internal open reading frame. During trans-translation Ala-aminoacylated tmRNA acts like a tRNA, entering the A-site of stalled ribosomes, displacing the stalled mRNA. The ribosome then switches to translate the ORF on the tmRNA; the nascent peptide is terminated with the 'tag peptide' encoded by the tmRNA and targeted for degradation. The ribosome is freed to recommence translation, which seems to be the essential function of trans-translation. The chain is SsrA-binding protein from Geobacter sulfurreducens (strain ATCC 51573 / DSM 12127 / PCA).